We begin with the raw amino-acid sequence, 371 residues long: Chaperone protein DnaJ (371 aa).

Positions 5-69 constitute a J domain; it reads DYYEVLGLSK…QKRAQYDQFG (65 aa). The segment at 133 to 215 adopts a CR-type zinc-finger fold; that stretch reads GKELNVEIPV…CHGSGKVRKR (83 aa). Zn(2+) contacts are provided by Cys146, Cys149, Cys163, Cys166, Cys189, Cys192, Cys203, and Cys206. CXXCXGXG motif repeat units lie at residues 146-153, 163-170, 189-196, and 203-210; these read CDTCKGSG, CKHCSGSG, CSHCSGTG, and CTTCHGSG.

It belongs to the DnaJ family. As to quaternary structure, homodimer. It depends on Zn(2+) as a cofactor.

The protein localises to the cytoplasm. Participates actively in the response to hyperosmotic and heat shock by preventing the aggregation of stress-denatured proteins and by disaggregating proteins, also in an autonomous, DnaK-independent fashion. Unfolded proteins bind initially to DnaJ; upon interaction with the DnaJ-bound protein, DnaK hydrolyzes its bound ATP, resulting in the formation of a stable complex. GrpE releases ADP from DnaK; ATP binding to DnaK triggers the release of the substrate protein, thus completing the reaction cycle. Several rounds of ATP-dependent interactions between DnaJ, DnaK and GrpE are required for fully efficient folding. Also involved, together with DnaK and GrpE, in the DNA replication of plasmids through activation of initiation proteins. This chain is Chaperone protein DnaJ, found in Bacillus anthracis (strain A0248).